The sequence spans 261 residues: Global transcriptional regulator CodY (261 aa).

A GAF domain region spans residues 1-159 (MANLLDKTRK…ASTVVGLQLL (159 aa)). The H-T-H motif DNA-binding region spans 207-226 (ASVIADRIGITRSVIVNALR).

This sequence belongs to the CodY family.

It is found in the cytoplasm. In terms of biological role, DNA-binding global transcriptional regulator which is involved in the adaptive response to starvation and acts by directly or indirectly controlling the expression of numerous genes in response to nutrient availability. During rapid exponential growth, CodY is highly active and represses genes whose products allow adaptation to nutrient depletion. This chain is Global transcriptional regulator CodY, found in Streptococcus thermophilus (strain CNRZ 1066).